Here is a 560-residue protein sequence, read N- to C-terminus: Membrane protein insertase YidC (560 aa).

A helical membrane pass occupies residues 1–21; the sequence is MDIKRTILIAALAIVSYVMVL. The segment at 42 to 66 is disordered; the sequence is VAPGLPDGVPAANNGASADVPSANA. 5 helical membrane-spanning segments follow: residues 341–361, 367–387, 437–457, 468–488, and 515–535; these read LELT…FWLL, LLGN…GLFF, LGGC…YWVL, WMLW…PIIM, and PIIF…YWVV.

It belongs to the OXA1/ALB3/YidC family. Type 1 subfamily. In terms of assembly, interacts with the Sec translocase complex via SecD. Specifically interacts with transmembrane segments of nascent integral membrane proteins during membrane integration.

The protein localises to the cell inner membrane. Required for the insertion and/or proper folding and/or complex formation of integral membrane proteins into the membrane. Involved in integration of membrane proteins that insert both dependently and independently of the Sec translocase complex, as well as at least some lipoproteins. Aids folding of multispanning membrane proteins. The protein is Membrane protein insertase YidC of Pseudomonas putida (strain W619).